A 95-amino-acid chain; its full sequence is DNA-binding protein CENSYa_1764 (95 aa).

Positions 1-21 are disordered; it reads MSYTDPDDSLPEHVPGEAEMS.

Belongs to the PDCD5 family.

This chain is DNA-binding protein CENSYa_1764, found in Cenarchaeum symbiosum (strain A).